Consider the following 523-residue polypeptide: 2-hydroxyisoflavanone synthase (523 aa).

A helical membrane pass occupies residues 2–22; sequence LVELAITLLVIALFIHLRPTL. Cys-450 contributes to the heme binding site.

It belongs to the cytochrome P450 family. Requires heme as cofactor.

The protein resides in the microsome membrane. The enzyme catalyses (2S)-liquiritigenin + reduced [NADPH--hemoprotein reductase] + O2 = (2R,3S)-2,4',7-trihydroxyisoflavanone + oxidized [NADPH--hemoprotein reductase] + H2O + H(+). It catalyses the reaction (2S)-naringenin + reduced [NADPH--hemoprotein reductase] + O2 = 2-hydroxy-2,3-dihydrogenistein + oxidized [NADPH--hemoprotein reductase] + H2O + H(+). In terms of biological role, 2-hydroxyisoflavanone synthase, which catalyzes the hydroxylation associated with 1,2-aryl migration of flavanones. Converts liquiritigenin and naringenin into highly unstable precursors of the isoflavones daidzein and genistein. Acts only on substrates with (2S)-chirality. The chain is 2-hydroxyisoflavanone synthase (CYP93C2) from Glycyrrhiza echinata (Licorice).